Here is a 225-residue protein sequence, read N- to C-terminus: NAD(P)H-quinone oxidoreductase subunit K, chloroplastic (225 aa).

Cys43, Cys44, Cys108, and Cys139 together coordinate [4Fe-4S] cluster.

This sequence belongs to the complex I 20 kDa subunit family. In terms of assembly, NDH is composed of at least 16 different subunits, 5 of which are encoded in the nucleus. It depends on [4Fe-4S] cluster as a cofactor.

The protein resides in the plastid. Its subcellular location is the chloroplast thylakoid membrane. It catalyses the reaction a plastoquinone + NADH + (n+1) H(+)(in) = a plastoquinol + NAD(+) + n H(+)(out). The catalysed reaction is a plastoquinone + NADPH + (n+1) H(+)(in) = a plastoquinol + NADP(+) + n H(+)(out). In terms of biological role, NDH shuttles electrons from NAD(P)H:plastoquinone, via FMN and iron-sulfur (Fe-S) centers, to quinones in the photosynthetic chain and possibly in a chloroplast respiratory chain. The immediate electron acceptor for the enzyme in this species is believed to be plastoquinone. Couples the redox reaction to proton translocation, and thus conserves the redox energy in a proton gradient. This Vitis vinifera (Grape) protein is NAD(P)H-quinone oxidoreductase subunit K, chloroplastic.